A 108-amino-acid chain; its full sequence is Iron-sulfur cluster assembly protein CyaY (108 aa).

The protein belongs to the frataxin family.

In terms of biological role, involved in iron-sulfur (Fe-S) cluster assembly. May act as a regulator of Fe-S biogenesis. This Burkholderia orbicola (strain MC0-3) protein is Iron-sulfur cluster assembly protein CyaY.